Reading from the N-terminus, the 288-residue chain is Pantothenate synthetase (288 aa).

Position 30–37 (30–37 (MGNLHAGH)) interacts with ATP. Histidine 37 serves as the catalytic Proton donor. A (R)-pantoate-binding site is contributed by glutamine 61. Beta-alanine is bound at residue glutamine 61. An ATP-binding site is contributed by 149–152 (GLKD). Glutamine 155 is a (R)-pantoate binding site. ATP-binding positions include isoleucine 178 and 186–189 (LSSR).

This sequence belongs to the pantothenate synthetase family. In terms of assembly, homodimer.

The protein localises to the cytoplasm. The enzyme catalyses (R)-pantoate + beta-alanine + ATP = (R)-pantothenate + AMP + diphosphate + H(+). Its pathway is cofactor biosynthesis; (R)-pantothenate biosynthesis; (R)-pantothenate from (R)-pantoate and beta-alanine: step 1/1. In terms of biological role, catalyzes the condensation of pantoate with beta-alanine in an ATP-dependent reaction via a pantoyl-adenylate intermediate. The protein is Pantothenate synthetase of Colwellia psychrerythraea (strain 34H / ATCC BAA-681) (Vibrio psychroerythus).